The following is a 465-amino-acid chain: Ribulose bisphosphate carboxylase large chain (465 aa).

The residue at position 4 (lysine 4) is an N6,N6,N6-trimethyllysine. Substrate-binding residues include asparagine 113 and threonine 163. The active-site Proton acceptor is lysine 165. Lysine 167 contributes to the substrate binding site. Residues lysine 191, aspartate 193, and glutamate 194 each contribute to the Mg(2+) site. N6-carboxylysine is present on lysine 191. Histidine 284 (proton acceptor) is an active-site residue. Residues arginine 285, histidine 317, and serine 369 each contribute to the substrate site.

The protein belongs to the RuBisCO large chain family. Type I subfamily. Heterohexadecamer of 8 large chains and 8 small chains; disulfide-linked. The disulfide link is formed within the large subunit homodimers. Mg(2+) is required as a cofactor. In terms of processing, the disulfide bond which can form in the large chain dimeric partners within the hexadecamer appears to be associated with oxidative stress and protein turnover.

The protein resides in the plastid. Its subcellular location is the chloroplast. It carries out the reaction 2 (2R)-3-phosphoglycerate + 2 H(+) = D-ribulose 1,5-bisphosphate + CO2 + H2O. The enzyme catalyses D-ribulose 1,5-bisphosphate + O2 = 2-phosphoglycolate + (2R)-3-phosphoglycerate + 2 H(+). Functionally, ruBisCO catalyzes two reactions: the carboxylation of D-ribulose 1,5-bisphosphate, the primary event in carbon dioxide fixation, as well as the oxidative fragmentation of the pentose substrate in the photorespiration process. Both reactions occur simultaneously and in competition at the same active site. This is Ribulose bisphosphate carboxylase large chain from Bauera rubioides (Dog rose).